The sequence spans 61 residues: Large ribosomal subunit protein uL29 (61 aa).

The protein belongs to the universal ribosomal protein uL29 family.

The sequence is that of Large ribosomal subunit protein uL29 from Nitratidesulfovibrio vulgaris (strain ATCC 29579 / DSM 644 / CCUG 34227 / NCIMB 8303 / VKM B-1760 / Hildenborough) (Desulfovibrio vulgaris).